The primary structure comprises 431 residues: UDP-N-acetylglucosamine 1-carboxyvinyltransferase (431 aa).

22 to 23 is a binding site for phosphoenolpyruvate; sequence KN. R102 is a binding site for UDP-N-acetyl-alpha-D-glucosamine. The Proton donor role is filled by C126. At C126 the chain carries 2-(S-cysteinyl)pyruvic acid O-phosphothioketal. UDP-N-acetyl-alpha-D-glucosamine is bound by residues D318 and I340.

It belongs to the EPSP synthase family. MurA subfamily.

The protein localises to the cytoplasm. The catalysed reaction is phosphoenolpyruvate + UDP-N-acetyl-alpha-D-glucosamine = UDP-N-acetyl-3-O-(1-carboxyvinyl)-alpha-D-glucosamine + phosphate. It functions in the pathway cell wall biogenesis; peptidoglycan biosynthesis. In terms of biological role, cell wall formation. Adds enolpyruvyl to UDP-N-acetylglucosamine. The chain is UDP-N-acetylglucosamine 1-carboxyvinyltransferase from Bartonella henselae (strain ATCC 49882 / DSM 28221 / CCUG 30454 / Houston 1) (Rochalimaea henselae).